A 1040-amino-acid chain; its full sequence is Multidrug resistance protein MdtB (1040 aa).

The next 11 helical transmembrane spans lie at 15 to 37, 345 to 362, 367 to 389, 396 to 418, 438 to 460, 472 to 494, 535 to 557, 867 to 889, 909 to 931, 968 to 990, and 1000 to 1022; these read LFILRPVATTLLMAAILLAGIIG, FELMLAIALVVMIIYLFL, ATIIPGVAVPLSLIGTFAVMVFL, LTLMALTIATGFVVDDAIVVIEN, GEIGFTIISLTFSLIAVLIPLLF, FAVTLAVAILISAVVSLTLTPMM, HPWLTLSVAFATLLLSVMLWIVI, VWLIVAAVVAMYIVLGVLYESFI, LIIAGSELDIIAIIGIILLIGIV, ILMTTLAALLGALPLMLSTGVGT, and MVGGLLVSQVLTLFTTPVIYLLF.

The protein belongs to the resistance-nodulation-cell division (RND) (TC 2.A.6) family. MdtB subfamily. As to quaternary structure, part of a tripartite efflux system composed of MdtA, MdtB and MdtC. MdtB forms a heteromultimer with MdtC.

It is found in the cell inner membrane. The polypeptide is Multidrug resistance protein MdtB (Salmonella typhimurium (strain LT2 / SGSC1412 / ATCC 700720)).